The sequence spans 409 residues: MSASPPSFLHSLKRLSLVTQIVIGLIAGIALALLAPEVAKSTTFIGKVFVSALKAVAPILVFVLVMASIANHKHGQETHIRPILVLYLLGTFAAAVVAVIASSLFPSALVLSTHDVAISAPGGITEVLQSLLLSVVDNPVSALMNANFIGILAWAIGMGVAIRHAGETTRTVLDDLSNGVTVIVRVVIRFAPLGIFGLVASTLATSGFNALLGYLHLLAVLIGCMLFVALVMNPLIVFWKIRRNPFPLVLTCLRESGITAFFTRSSAANIPVNLELSKRLGLHEDTYSVSIPLGATINMAGAAITITVLTLAAVHTLGIAVDLPTAVLLSVVAAICACGASGVAGGSLLLIPLACSLFGIPSEIAMQVVAVGFIIGVLQDSAETALNSSTDVLFTAAACMAQEDKAQAA.

A run of 9 helical transmembrane segments spans residues 15-35 (LSLV…ALLA), 49-69 (FVSA…MASI), 82-102 (PILV…VIAS), 142-162 (ALMN…GVAI), 193-213 (LGIF…ALLG), 218-238 (LAVL…LIVF), 301-321 (GAAI…GIAV), 331-351 (VVAA…LLLI), and 357-377 (LFGI…IIGV).

This sequence belongs to the dicarboxylate/amino acid:cation symporter (DAACS) (TC 2.A.23) family.

It localises to the cell inner membrane. The catalysed reaction is L-serine(in) + Na(+)(in) = L-serine(out) + Na(+)(out). It catalyses the reaction L-threonine(in) + Na(+)(in) = L-threonine(out) + Na(+)(out). In terms of biological role, involved in the import of serine and threonine into the cell, with the concomitant import of sodium (symport system). The chain is Serine/threonine transporter SstT from Pseudomonas fluorescens (strain ATCC BAA-477 / NRRL B-23932 / Pf-5).